Reading from the N-terminus, the 161-residue chain is Anaerobic nitrite reductase Glb1-1 (161 aa).

Residues cysteine 8–lysine 157 enclose the Globin domain. The short motif at glutamate 41–serine 45 is the Homodimerization element. Serine 51, lysine 65, histidine 69, lysine 99, threonine 103, and histidine 104 together coordinate heme b. The Homodimerization motif lies at asparagine 111 to aspartate 123.

This sequence belongs to the plant globin family. In terms of assembly, homodimer. The cofactor is heme b. As to expression, mainly expressed in root nodules, and, to a lower extent, in leaves, roots, stems, flowers and fruits. Accumulates in mature root nodules.

It catalyses the reaction Fe(III)-heme b-[protein] + nitric oxide + H2O = Fe(II)-heme b-[protein] + nitrite + 2 H(+). Phytoglobin that reduces nitrite to nitric oxide (NO) under anoxic conditions (e.g. during flooding or in waterlogged soil) and upon root nodulation. Required for general plant development and during nodulation, especially for the onset of symbiosis. Monitors nitric oxide (NO) levels during early phase of the nitrogen-fixing symbiosis and buffers oxygen in functioning nodules. May not function as an oxygen storage or transport protein. Has an unusually high affinity for O(2) through a hexacoordinate heme iron because of a very low dissociation constant. The protein is Anaerobic nitrite reductase Glb1-1 of Lotus japonicus (Lotus corniculatus var. japonicus).